Reading from the N-terminus, the 202-residue chain is Glycerol-3-phosphate acyltransferase 1 (202 aa).

5 consecutive transmembrane segments (helical) span residues 8 to 28, 85 to 105, 122 to 142, 146 to 166, and 173 to 190; these read AGMI…MSTG, LSLT…IWPL, ILVV…FVLA, QFTL…LIMA, and AGLA…RKNI.

The protein belongs to the PlsY family. As to quaternary structure, probably interacts with PlsX.

Its subcellular location is the cell membrane. The enzyme catalyses an acyl phosphate + sn-glycerol 3-phosphate = a 1-acyl-sn-glycero-3-phosphate + phosphate. It participates in lipid metabolism; phospholipid metabolism. Its function is as follows. Catalyzes the transfer of an acyl group from acyl-phosphate (acyl-PO(4)) to glycerol-3-phosphate (G3P) to form lysophosphatidic acid (LPA). This enzyme utilizes acyl-phosphate as fatty acyl donor, but not acyl-CoA or acyl-ACP. This Desulfitobacterium hafniense (strain Y51) protein is Glycerol-3-phosphate acyltransferase 1.